The chain runs to 318 residues: Olfactory receptor 10H1 (318 aa).

Over 1-25 (MQRANHSTVTQFILVGFSVFPHLQL) the chain is Extracellular. N-linked (GlcNAc...) asparagine glycosylation is present at Asn5. Residues 26 to 46 (MLFLLFLLMYLFTLLGNLLIM) form a helical membrane-spanning segment. Residues 47-54 (ATVWSERS) are Cytoplasmic-facing. The helical transmembrane segment at 55–75 (LHTPMYLFLCALSVSEILYTV) threads the bilayer. Topologically, residues 76–99 (AIIPRMLADLLSTQRSIAFLACAS) are extracellular. A disulfide bridge connects residues Cys97 and Cys189. Residues 100–120 (QMFFSFSFGFTHSFLLTVMGY) form a helical membrane-spanning segment. Over 121-139 (DRYVAICHPLRYNVLMSPR) the chain is Cytoplasmic. Residues 140–160 (GCACLVGCSWAGGLVMGMVVT) traverse the membrane as a helical segment. Residues 161–197 (SAIFHLAFCGHKEIHHFACHVPPLLKLACGDDVLVVA) lie on the Extracellular side of the membrane. Residues 198-218 (KGVGLVCITALLGCFLLILLS) form a helical membrane-spanning segment. Topologically, residues 219–238 (YAFIVAAILKIPSAEGRNKA) are cytoplasmic. The chain crosses the membrane as a helical span at residues 239–259 (FSTCASHLTVVVVHYGFASVI). The Extracellular portion of the chain corresponds to 260 to 272 (YLKPKSPQSLEGD). A helical transmembrane segment spans residues 273-293 (TLMGITYTVLTPFLSPIIFSL). At 294 to 318 (RNKELKVAMKKTFFSKLYPEKNVMM) the chain is on the cytoplasmic side.

This sequence belongs to the G-protein coupled receptor 1 family.

The protein resides in the cell membrane. In terms of biological role, odorant receptor. In Homo sapiens (Human), this protein is Olfactory receptor 10H1 (OR10H1).